A 382-amino-acid chain; its full sequence is Dual-specificity RNA methyltransferase RlmN (382 aa).

Glutamate 113 acts as the Proton acceptor in catalysis. One can recognise a Radical SAM core domain in the interval 119 to 358 (EINRATLCIS…TTIRKQRGID (240 aa)). A disulfide bond links cysteine 126 and cysteine 363. The [4Fe-4S] cluster site is built by cysteine 133, cysteine 137, and cysteine 140. S-adenosyl-L-methionine-binding positions include 187 to 188 (GE), serine 219, 241 to 243 (SLH), and asparagine 320. Catalysis depends on cysteine 363, which acts as the S-methylcysteine intermediate.

This sequence belongs to the radical SAM superfamily. RlmN family. Requires [4Fe-4S] cluster as cofactor.

The protein localises to the cytoplasm. It catalyses the reaction adenosine(2503) in 23S rRNA + 2 reduced [2Fe-2S]-[ferredoxin] + 2 S-adenosyl-L-methionine = 2-methyladenosine(2503) in 23S rRNA + 5'-deoxyadenosine + L-methionine + 2 oxidized [2Fe-2S]-[ferredoxin] + S-adenosyl-L-homocysteine. The catalysed reaction is adenosine(37) in tRNA + 2 reduced [2Fe-2S]-[ferredoxin] + 2 S-adenosyl-L-methionine = 2-methyladenosine(37) in tRNA + 5'-deoxyadenosine + L-methionine + 2 oxidized [2Fe-2S]-[ferredoxin] + S-adenosyl-L-homocysteine. Functionally, specifically methylates position 2 of adenine 2503 in 23S rRNA and position 2 of adenine 37 in tRNAs. m2A2503 modification seems to play a crucial role in the proofreading step occurring at the peptidyl transferase center and thus would serve to optimize ribosomal fidelity. This Wigglesworthia glossinidia brevipalpis protein is Dual-specificity RNA methyltransferase RlmN.